The sequence spans 73 residues: Mitofissin (73 aa).

This sequence belongs to the ?ATG44? family. In terms of assembly, homooligomer. Found as homooctamer in solution, but binds to membranes either as a monomer, dimer, or tetramer, not as an octamer.

It localises to the mitochondrion intermembrane space. The protein localises to the vacuole. Mitochondrial fission factor that acts directly on lipid membranes to drive mitochondrial fission required for mitophagy. Directly binds to lipid membranes and brings about lipid membrane fragility to facilitate membrane fission and engulfment of mitochondria by the phagophore. This Saccharomyces cerevisiae (strain ATCC 204508 / S288c) (Baker's yeast) protein is Mitofissin.